A 522-amino-acid polypeptide reads, in one-letter code: Sterol O-acyltransferase 2 (522 aa).

2 disordered regions span residues 1–36 and 74–96; these read MEPG…HRAP and SYPS…TQEP. The Cytoplasmic portion of the chain corresponds to 1–120; sequence MEPGGARLRL…LDELMEVQHF (120 aa). The span at 17–36 shows a compositional bias: basic and acidic residues; sequence GGERERQPCGDGNTETHRAP. His119 provides a ligand contact to cholesterol. A helical membrane pass occupies residues 121-142; the sequence is RTIYHMFIAGLCVFIISTLAID. Topologically, residues 143–162 are lumenal; the sequence is FIDEGRLLLEFDLLIFSFGQ. Residues 163 to 188 form a helical membrane-spanning segment; that stretch reads LPLALVTWVPMFLSTLLAPYQALRLW. Residues 189–196 lie on the Cytoplasmic side of the membrane; it reads ARGTWTQA. A helical transmembrane segment spans residues 197-220; sequence TGLGCALLAAHAVVLCALPVHVAV. Topologically, residues 221 to 228 are lumenal; it reads EHQLPPAS. A helical membrane pass occupies residues 229–252; the sequence is RCVLVFEQVRFLMKSYSFLREAVP. Residues 253 to 293 lie on the Cytoplasmic side of the membrane; sequence GTLRARRGEGIQAPSFSSYLYFLFCPTLIYRETYPRTPYVR. Cys277 bears the Cysteine sulfenic acid (-SOH); alternate mark. Cys277 participates in a covalent cross-link: Glycyl cysteine thioester (Cys-Gly) (interchain with G-Cter in ubiquitin); alternate. Residues 294–326 traverse the membrane as a helical segment; sequence WNYVAKNFAQALGCVLYACFILGRLCVPVFANM. Over 327-343 the chain is Lumenal; the sequence is SREPFSTRALVLSILHA. A helical transmembrane segment spans residues 344–369; the sequence is TLPGIFMLLLIFFAFLHCWLNAFAEM. Residues 370–417 lie on the Cytoplasmic side of the membrane; the sequence is LRFGDRMFYRDWWNSTSFSNYYRTWNVVVHDWLYSYVYQDGLRLLGAR. The short motif at 377 to 383 is the FYXDWWN motif element; it reads FYRDWWN. An acyl-CoA is bound by residues Asn389, Arg392, Asn395, His399, Tyr407, and Ser430. A helical membrane pass occupies residues 418–442; it reads ARGVAMLGVFLVSAVAHEYIFCFVL. The active site involves His434. Over 443–448 the chain is Lumenal; the sequence is GFFYPV. The helical transmembrane segment at 449-464 threads the bilayer; the sequence is MLILFLVIGGMLNFMM. The Cytoplasmic portion of the chain corresponds to 465 to 470; it reads HDQRTG. A helical membrane pass occupies residues 471-502; it reads PAWNVLMWTMLFLGQGIQVSLYCQEWYARRHC. Residues 503-522 lie on the Lumenal side of the membrane; that stretch reads PLPQATFWGLVTPRSWSCHT.

Belongs to the membrane-bound acyltransferase family. Sterol o-acyltransferase subfamily. As to quaternary structure, may form homo- or heterodimers. Interacts with INSIG1; the interaction is direct and promotes association with AMFR/gp78. Polyubiquitinated by AMFR/gp78 at Cys-277, leading to its degradation when the lipid levels are low. Association with AMFR/gp78 is mediated via interaction with INSIG1. High concentration of cholesterol and fatty acid results in Cys-277 oxidation, preventing ubiquitination at the same site, resulting in protein stabilization. Post-translationally, oxidized at Cys-277: high concentration of cholesterol and fatty acid induce reactive oxygen species, which oxidizes Cys-277, preventing ubiquitination at the same site, and resulting in protein stabilization. In terms of tissue distribution, expression seems confined in hepatocytes and enterocytes.

The protein localises to the endoplasmic reticulum membrane. It catalyses the reaction a sterol + a long-chain fatty acyl-CoA = a long-chain 3-hydroxysterol ester + CoA. It carries out the reaction cholesterol + an acyl-CoA = a cholesterol ester + CoA. The catalysed reaction is cholesterol + (9Z)-octadecenoyl-CoA = cholesteryl (9Z-octadecenoate) + CoA. The enzyme catalyses (5Z,8Z,11Z,14Z,17Z)-eicosapentaenoyl-CoA + cholesterol = (5Z,8Z,11Z,14Z,17Z-eicosapentaenoyl)-cholesterol + CoA. It catalyses the reaction (9Z,12Z,15Z)-octadecatrienoyl-CoA + cholesterol = (9Z,12Z,15Z-octadecatrienoyl)-cholesterol + CoA. It carries out the reaction (5Z,8Z,11Z,14Z)-eicosatetraenoyl-CoA + cholesterol = cholesteryl (5Z,8Z,11Z,14Z)-eicosatetraenoate + CoA. Functionally, catalyzes the formation of fatty acid-cholesterol esters, which are less soluble in membranes than cholesterol. Plays a role in lipoprotein assembly and dietary cholesterol absorption. Utilizes oleoyl-CoA ((9Z)-octadecenoyl-CoA) and linolenoyl-CoA ((9Z,12Z,15Z)-octadecatrienoyl-CoA) as substrates. May provide cholesteryl esters for lipoprotein secretion from hepatocytes and intestinal mucosa. Has lower enzymatic activity compared to isoform 1. This Homo sapiens (Human) protein is Sterol O-acyltransferase 2.